The primary structure comprises 518 residues: Lysine--tRNA ligase (518 aa).

The tract at residues 1–28 is disordered; that stretch reads MTEPTQPNAAQPDAARPNVAPEMDDNKI. Mg(2+) contacts are provided by Glu428 and Glu435.

The protein belongs to the class-II aminoacyl-tRNA synthetase family. Homodimer. Mg(2+) is required as a cofactor.

The protein resides in the cytoplasm. It catalyses the reaction tRNA(Lys) + L-lysine + ATP = L-lysyl-tRNA(Lys) + AMP + diphosphate. The polypeptide is Lysine--tRNA ligase (Paraburkholderia phytofirmans (strain DSM 17436 / LMG 22146 / PsJN) (Burkholderia phytofirmans)).